The following is a 637-amino-acid chain: Probable serine/threonine-protein kinase DDB_G0283065 (637 aa).

Disordered regions lie at residues 36 to 88 (NNNN…KFNR) and 155 to 234 (NSNN…RFNN). Positions 53 to 85 (NNSTTKSIDNNNNNTNNSNSNNNNNDNIKNNNK) are enriched in low complexity. One can recognise a Protein kinase domain in the interval 236–629 (FNDVRVLGKG…NQISTDYDNF (394 aa)). ATP contacts are provided by residues 242-250 (LGKGGFGIV) and Lys265. Asp479 functions as the Proton acceptor in the catalytic mechanism.

The protein belongs to the protein kinase superfamily. Ser/Thr protein kinase family. GCN2 subfamily.

It catalyses the reaction L-seryl-[protein] + ATP = O-phospho-L-seryl-[protein] + ADP + H(+). It carries out the reaction L-threonyl-[protein] + ATP = O-phospho-L-threonyl-[protein] + ADP + H(+). This chain is Probable serine/threonine-protein kinase DDB_G0283065, found in Dictyostelium discoideum (Social amoeba).